Consider the following 328-residue polypeptide: Phenylalanine--tRNA ligase alpha subunit (328 aa).

Glu245 is a binding site for Mg(2+).

The protein belongs to the class-II aminoacyl-tRNA synthetase family. Phe-tRNA synthetase alpha subunit type 1 subfamily. Tetramer of two alpha and two beta subunits. Requires Mg(2+) as cofactor.

It is found in the cytoplasm. It catalyses the reaction tRNA(Phe) + L-phenylalanine + ATP = L-phenylalanyl-tRNA(Phe) + AMP + diphosphate + H(+). This Helicobacter acinonychis (strain Sheeba) protein is Phenylalanine--tRNA ligase alpha subunit.